We begin with the raw amino-acid sequence, 159 residues long: Cyclic pyranopterin monophosphate synthase (159 aa).

Substrate-binding positions include 75-77 (LCH) and 113-114 (ME). D128 is a catalytic residue.

The protein belongs to the MoaC family. Homohexamer; trimer of dimers.

The catalysed reaction is (8S)-3',8-cyclo-7,8-dihydroguanosine 5'-triphosphate = cyclic pyranopterin phosphate + diphosphate. It participates in cofactor biosynthesis; molybdopterin biosynthesis. In terms of biological role, catalyzes the conversion of (8S)-3',8-cyclo-7,8-dihydroguanosine 5'-triphosphate to cyclic pyranopterin monophosphate (cPMP). In Yersinia pseudotuberculosis serotype IB (strain PB1/+), this protein is Cyclic pyranopterin monophosphate synthase.